Consider the following 156-residue polypeptide: Protein FAM162A (156 aa).

A disordered region spans residues 37-57 (TNGFCSKPQESPKPPDQHTYS). The interval 78–104 (RFKKEDEIPETVSFEMLDAAKNKVRVK) is required for proapoptotic activity. The helical transmembrane segment at 105-122 (ISYVMIALTVAGCVLMVI) threads the bilayer.

This sequence belongs to the UPF0389 family. As to quaternary structure, interacts with HSP90AB1; HSP90AB1 is essential for FAM162A mitochondrial localization and pro-apoptotic activity. Interacts with VDAC2; the interaction is probably involved in inducing mitochondrial permeability transition.

Its subcellular location is the mitochondrion membrane. In terms of biological role, proposed to be involved in regulation of apoptosis; the exact mechanism may differ between cell types/tissues. May be involved in hypoxia-induced cell death of transformed cells implicating cytochrome C release and caspase activation (such as CASP9) and inducing mitochondrial permeability transition. May be involved in hypoxia-induced cell death of neuronal cells probably by promoting release of AIFM1 from mitochondria to cytoplasm and its translocation to the nucleus; however, the involvement of caspases has been reported conflictingly. This chain is Protein FAM162A (FAM162A), found in Bos taurus (Bovine).